Reading from the N-terminus, the 565-residue chain is Periplasmic trehalase (565 aa).

The first 30 residues, methionine 1 to alanine 30, serve as a signal peptide directing secretion. Substrate contacts are provided by residues arginine 152, tryptophan 159–aspartate 160, asparagine 196, arginine 205–glutamine 207, arginine 277–glutamate 279, and glycine 310. Catalysis depends on proton donor/acceptor residues aspartate 312 and glutamate 496. Residue glutamate 511 coordinates substrate. A disordered region spans residues cysteine 539–proline 565.

It belongs to the glycosyl hydrolase 37 family. In terms of assembly, monomer.

It localises to the periplasm. It carries out the reaction alpha,alpha-trehalose + H2O = alpha-D-glucose + beta-D-glucose. Provides the cells with the ability to utilize trehalose at high osmolarity by splitting it into glucose molecules that can subsequently be taken up by the phosphotransferase-mediated uptake system. The polypeptide is Periplasmic trehalase (Escherichia coli O7:K1 (strain IAI39 / ExPEC)).